The following is a 554-amino-acid chain: Hydroxylamine reductase (554 aa).

C3, C6, C18, and C25 together coordinate [2Fe-2S] cluster. Hybrid [4Fe-2O-2S] cluster is bound by residues H252, E276, C320, C408, C436, C461, E495, and K497. Position 408 is a cysteine persulfide (C408).

The protein belongs to the HCP family. Requires [2Fe-2S] cluster as cofactor. Hybrid [4Fe-2O-2S] cluster serves as cofactor.

Its subcellular location is the cytoplasm. It catalyses the reaction A + NH4(+) + H2O = hydroxylamine + AH2 + H(+). Its function is as follows. Catalyzes the reduction of hydroxylamine to form NH(3) and H(2)O. This Shewanella baltica (strain OS155 / ATCC BAA-1091) protein is Hydroxylamine reductase.